Here is a 90-residue protein sequence, read N- to C-terminus: UPF0335 protein RPA4190 (90 aa).

This sequence belongs to the UPF0335 family.

In Rhodopseudomonas palustris (strain ATCC BAA-98 / CGA009), this protein is UPF0335 protein RPA4190.